A 454-amino-acid polypeptide reads, in one-letter code: Protoheme IX farnesyltransferase 1 (454 aa).

A unknown region spans residues M1–L186. A run of 4 helical transmembrane segments spans residues L9–L29, G59–T79, L87–G107, and L113–L133. The interval T137–A164 is disordered. Helical transmembrane passes span L186–V206, V209–V229, V251–F271, L276–I296, N300–Y320, A321–W341, H377–D397, L398–V418, and F433–A453. The tract at residues M187–S451 is protoheme IX prenyltransferase.

In the C-terminal section; belongs to the UbiA prenyltransferase family. Protoheme IX farnesyltransferase subfamily.

It is found in the cell membrane. The catalysed reaction is heme b + (2E,6E)-farnesyl diphosphate + H2O = Fe(II)-heme o + diphosphate. The protein operates within porphyrin-containing compound metabolism; heme O biosynthesis; heme O from protoheme: step 1/1. Converts heme B (protoheme IX) to heme O by substitution of the vinyl group on carbon 2 of heme B porphyrin ring with a hydroxyethyl farnesyl side group. The protein is Protoheme IX farnesyltransferase 1 (ctaB1) of Natronomonas pharaonis (strain ATCC 35678 / DSM 2160 / CIP 103997 / JCM 8858 / NBRC 14720 / NCIMB 2260 / Gabara) (Halobacterium pharaonis).